The sequence spans 202 residues: NAD(P)H-quinone oxidoreductase subunit I (202 aa).

4Fe-4S ferredoxin-type domains are found at residues 55–84 and 95–124; these read GRIH…VDWV and KNYS…MTEE. [4Fe-4S] cluster is bound by residues Cys-64, Cys-67, Cys-70, Cys-74, Cys-104, Cys-107, Cys-110, and Cys-114. The span at 168-187 shows a compositional bias: basic and acidic residues; sequence EYDPHVVPSDRPRAGQRPEE. Residues 168 to 202 are disordered; sequence EYDPHVVPSDRPRAGQRPEELVDQYKQAAAANEEN.

The protein belongs to the complex I 23 kDa subunit family. In terms of assembly, NDH-1 is composed of at least 11 different subunits. [4Fe-4S] cluster serves as cofactor.

The protein localises to the cellular thylakoid membrane. The enzyme catalyses a plastoquinone + NADH + (n+1) H(+)(in) = a plastoquinol + NAD(+) + n H(+)(out). It catalyses the reaction a plastoquinone + NADPH + (n+1) H(+)(in) = a plastoquinol + NADP(+) + n H(+)(out). In terms of biological role, NDH-1 shuttles electrons from an unknown electron donor, via FMN and iron-sulfur (Fe-S) centers, to quinones in the respiratory and/or the photosynthetic chain. The immediate electron acceptor for the enzyme in this species is believed to be plastoquinone. Couples the redox reaction to proton translocation, and thus conserves the redox energy in a proton gradient. The polypeptide is NAD(P)H-quinone oxidoreductase subunit I (Synechococcus elongatus (strain ATCC 33912 / PCC 7942 / FACHB-805) (Anacystis nidulans R2)).